The primary structure comprises 192 residues: MENSPLTLDRFLSRFQLLRPQMSRSSLNQRQAAVLVPVVRRPEPGLLLTKRAATLRKHAGQVAFPGGAVDDTDASLIAAALREAQEEVAIPPEAVDVIGVLPPVDSVTGFQVTPVVGIIPPDLPYHASEDEVAAVFEMPLAEALRLGRYHPLDIHRRGNHHRVWLSWYQHYFVWGMTAGIIRELALQIGEKP.

One can recognise a Nudix hydrolase domain in the interval 29 to 160 (QRQAAVLVPV…PLDIHRRGNH (132 aa)). The Nudix box motif lies at 67–89 (GAVDDTDASLIAAALREAQEEVA). The Mg(2+) site is built by Glu-83 and Glu-87.

Belongs to the Nudix hydrolase family. PCD1 subfamily. Mn(2+) is required as a cofactor. The cofactor is Mg(2+).

Functionally, probably mediates the hydrolysis of some nucleoside diphosphate derivatives. This is an uncharacterized protein from Cronobacter sakazakii (strain ATCC BAA-894) (Enterobacter sakazakii).